We begin with the raw amino-acid sequence, 1966 residues long: Probable serine/threonine-protein kinase vps15 (1966 aa).

Positions 21–303 (IVFKKSLGNA…QYFSFAHQFI (283 aa)) constitute a Protein kinase domain. ATP is bound by residues 27-35 (LGNARFLKT) and lysine 49. Residue aspartate 144 is the Proton acceptor of the active site. The disordered stretch occupies residues 362 to 407 (PILISNNNNNNNNNNNNNNNNNNNNNNNNNNNNNNNNNQTTTTTTN). The span at 367–407 (NNNNNNNNNNNNNNNNNNNNNNNNNNNNNNNNNQTTTTTTN) shows a compositional bias: low complexity. 4 HEAT repeats span residues 558-596 (CRLQKIVPYIMSMISPEQPTLVRVEALRSLAKVLEMVQT), 604-642 (IFGQYILPSLSQLSHESTDEIIRIAFAEILPQLATTAKR), 717-754 (KTNESVLPLIITFLNDRDWQLRCAFFENIVAVCTVVGA), and 756-793 (SLESFIYPCILLALTDEEEFVTEKALSSLSELCSLGLL). Disordered regions lie at residues 916–937 (SFNSNGSGGGGNPNLVSSTGGS), 1036–1062 (SSSNNSNNNTLSSSTTSSNSTTPTNST), 1106–1130 (GGITTGGTTTTTLGRSSSPQLTGLN), and 1190–1263 (TSLS…NNMN). Low complexity-rich tracts occupy residues 1106–1119 (GGITTGGTTTTTLG) and 1192–1263 (LSNS…NNMN). 4 WD repeats span residues 1460–1499 (EHKAAVNEIQVSSDNLFFATASNDGTVKIWDCQRMEKSVT), 1508–1547 (QQEGRITSISICEKTHSIASASDKGSIHVFRVGISGKQKN), 1564–1605 (TTRG…DAFN), and 1610–1649 (ASLGLIQAFLIDPNRNWLVTGTSRGFLTCWDLRFGIPLYS). The disordered stretch occupies residues 1699 to 1743 (RSYEQPPQQQPQQPQPPQQQQQQQSQMNRSINMTSSTTTTTTSSY). 2 stretches are compositionally biased toward low complexity: residues 1703–1722 (QPPQQQPQQPQPPQQQQQQQ) and 1732–1742 (TSSTTTTTTSS). 2 WD repeats span residues 1790-1829 (KPTPLVRALLNPPNCPFLITAGDDKRIKLWDWNNLPQSYY) and 1935-1966 (HHQEPILDIKMMEVPNPMLISASTDGVVKVWK).

Belongs to the protein kinase superfamily. Ser/Thr protein kinase family.

It catalyses the reaction L-seryl-[protein] + ATP = O-phospho-L-seryl-[protein] + ADP + H(+). The catalysed reaction is L-threonyl-[protein] + ATP = O-phospho-L-threonyl-[protein] + ADP + H(+). In Dictyostelium discoideum (Social amoeba), this protein is Probable serine/threonine-protein kinase vps15 (vps15).